The chain runs to 751 residues: Photosystem I P700 chlorophyll a apoprotein A1 (751 aa).

8 helical membrane passes run 71–94 (VFSA…FHGA), 157–180 (LYCT…FHYH), 196–220 (LNHH…HVSL), 292–310 (TAHH…GHMY), 347–370 (WHAQ…HHMY), 386–412 (LSLF…IFLV), 434–456 (AIIS…LYIH), and 532–550 (FLVH…LILL). Residues C574 and C583 each contribute to the [4Fe-4S] cluster site. A run of 2 helical transmembrane segments spans residues 590–611 (HVFL…HFSW) and 665–687 (LSAY…MFLF). A chlorophyll a'-binding site is contributed by H676. The chlorophyll a site is built by M684 and Y692. W693 contributes to the phylloquinone binding site. A helical membrane pass occupies residues 725–745 (AVGVAHYLLGGIVTTWAFFLA).

It belongs to the PsaA/PsaB family. In terms of assembly, the PsaA/B heterodimer binds the P700 chlorophyll special pair and subsequent electron acceptors. PSI consists of a core antenna complex that captures photons, and an electron transfer chain that converts photonic excitation into a charge separation. The eukaryotic PSI reaction center is composed of at least 11 subunits. It depends on P700 is a chlorophyll a/chlorophyll a' dimer, A0 is one or more chlorophyll a, A1 is one or both phylloquinones and FX is a shared 4Fe-4S iron-sulfur center. as a cofactor.

It localises to the plastid. It is found in the chloroplast thylakoid membrane. It carries out the reaction reduced [plastocyanin] + hnu + oxidized [2Fe-2S]-[ferredoxin] = oxidized [plastocyanin] + reduced [2Fe-2S]-[ferredoxin]. Functionally, psaA and PsaB bind P700, the primary electron donor of photosystem I (PSI), as well as the electron acceptors A0, A1 and FX. PSI is a plastocyanin-ferredoxin oxidoreductase, converting photonic excitation into a charge separation, which transfers an electron from the donor P700 chlorophyll pair to the spectroscopically characterized acceptors A0, A1, FX, FA and FB in turn. Oxidized P700 is reduced on the lumenal side of the thylakoid membrane by plastocyanin. The chain is Photosystem I P700 chlorophyll a apoprotein A1 from Welwitschia mirabilis (Tree tumbo).